The chain runs to 427 residues: Nucleolar and spindle-associated protein 1 (427 aa).

The segment at 41 to 190 (AHLNPETRKE…LGNNKRTSAT (150 aa)) is disordered. Over residues 43 to 55 (LNPETRKENKNQD) the composition is skewed to basic and acidic residues. Positions 83–96 (TKTRRRRRKKHKTI) are enriched in basic residues. Over residues 119–128 (NFQNQENQEN) the composition is skewed to low complexity. Ser-139 is subject to Phosphoserine. Over residues 159 to 179 (NDIKDSKKPLEKRSLCTDEFS) the composition is skewed to basic and acidic residues. Over residues 181-190 (LGNNKRTSAT) the composition is skewed to polar residues. Residue Thr-191 is modified to Phosphothreonine. Residues 235-312 (IVTPVPPRGR…QAVFRTPKSK (78 aa)) form a disordered region. The segment at 243 to 367 (GRLSVPCTPA…HKGKLKPWGQ (125 aa)) is interaction with microtubules. Ser-246 carries the phosphoserine modification. The residue at position 250 (Thr-250) is a Phosphothreonine. Over residues 252 to 264 (ARQQCPQGHSATK) the composition is skewed to polar residues. At Ser-261 the chain carries Phosphoserine. Phosphothreonine occurs at positions 323 and 334. Residues Ser-337 and Ser-348 each carry the phosphoserine modification. Residues 354 to 427 (NYKPHKGKLK…RRNLGVTKAQ (74 aa)) form a disordered region. A KEN box motif is present at residues 369 to 375 (KENNSLN). Positions 393 to 425 (LQTREERWKRQEQERKEKKEKLLEARRNLGVTK) form a coiled coil. Positions 394–419 (QTREERWKRQEQERKEKKEKLLEARR) are enriched in basic and acidic residues.

It belongs to the NUSAP family. As to quaternary structure, interacts with DNA and microtubules. Microtubule bundling is inhibited by IPO7, KPNA2 and KPNB1 while association with DNA is also inhibited by IPO7 and KPNA2. In terms of processing, ubiquitinated. Ubiquitination by FZR1 may lead to proteasome-dependent degradation of this protein.

It localises to the cytoplasm. Its subcellular location is the nucleus. It is found in the nucleolus. The protein resides in the cytoskeleton. The protein localises to the spindle. It localises to the chromosome. Its function is as follows. Microtubule-associated protein with the capacity to bundle and stabilize microtubules. May associate with chromosomes and promote the organization of mitotic spindle microtubules around them. The polypeptide is Nucleolar and spindle-associated protein 1 (Nusap1) (Mus musculus (Mouse)).